A 270-amino-acid polypeptide reads, in one-letter code: MNCFQEKQFLRENLLKMPFRMVLTGGSGSGKTIYLLSLFSTLVKKYKHIFLFTPVYNPDYDGYIWPNHINFVSSQESLEYNLIRTKSNIEKCITVAQNHKKSAHFLLIFDDVGDKLSKCNTLIEFLNFGRHLNTSIILLCQTYRHVPILGRANITHFCSFNISISDAENMLRSMPVKGKRKDILNMLNMIQTVRSNNRLAIIIEDSVFCEGELRICTDTADKDVIEQKLNIDILVNQYSHMKKNLNTILESTKTKLCNSDQSSSSKNVSS.

25-32 provides a ligand contact to ATP; that stretch reads GGSGSGKT.

This sequence belongs to the orthopoxvirus OPG160 protein family. In terms of assembly, interacts with protein OPG137.

Participates in viral DNA packaging and virion morphogenesis. The chain is DNA packaging protein OPG160 (OPG160) from Variola virus (isolate Human/India/Ind3/1967) (VARV).